We begin with the raw amino-acid sequence, 249 residues long: Hydroxyacylglutathione hydrolase (249 aa).

7 residues coordinate Zn(2+): H53, H55, D57, H58, H110, D127, and H165.

This sequence belongs to the metallo-beta-lactamase superfamily. Glyoxalase II family. As to quaternary structure, monomer. Zn(2+) serves as cofactor.

It carries out the reaction an S-(2-hydroxyacyl)glutathione + H2O = a 2-hydroxy carboxylate + glutathione + H(+). It functions in the pathway secondary metabolite metabolism; methylglyoxal degradation; (R)-lactate from methylglyoxal: step 2/2. In terms of biological role, thiolesterase that catalyzes the hydrolysis of S-D-lactoyl-glutathione to form glutathione and D-lactic acid. The chain is Hydroxyacylglutathione hydrolase from Hamiltonella defensa subsp. Acyrthosiphon pisum (strain 5AT).